Consider the following 662-residue polypeptide: MKPLEKFLKKQTSQLAGRAVTGGPGGGPGCCGGPGGGGGPGGGGGPAGGLRPLQRRQSVSRLLLPAFLREPPTEPGLEPPVEEEGGEPLGVSEEPGSGGPCWLQLEEVPGPGPIGSGVPLRSPSSYSSDELSPGEPLASPPWAPLGAPERPEHLLNRVLERLAGGTTRDSSASDILLDDIVLTHSLFLPTEKFLQELHQYFVQSRNVEGPEGLGRKQACLALLLHFLDTYQGLLQEEEGAGHIIKELYLLIMKDESLYQDLREDTLRLHQLVETVELKIPEESQPPSKQVKPLFRHFRRIDSCLQTRVAFRGSDEIFCRVYMPDHSYVTIRSRLSASVQDILGSVTEKLQYSEEPAEREDALILVAVASSGEKVLLQPTEDCVFTTLGINSHLFACTRDSYEALVPLPEEVQVSPGDTEIHRVEPEDVANHLTAFHWELFRCVHELEFVDYVFHGERGRRETANLELLLQRCSEVTHWVATEVLLCEAPGKRVQLLKKFIKIAAICKQNQDLLSFYAVVMGLDNAAVSRLRLTWEKLPGKFKNLFRKFEGLTDPCRNHKSYREVISKMKPPLIPFVPLILKDLTFLHEGSKTLVDGLVNIEKLHSVAEKVRTIRKYRSRPLCLDMEASPHHLQTKAYVRQFQVIDNQNHLFELSYKLEANSQ.

Residues 1–149 are disordered; sequence MKPLEKFLKK…PPWAPLGAPE (149 aa). The segment covering 20–48 has biased composition (gly residues); it reads VTGGPGGGPGCCGGPGGGGGPGGGGGPAG. 2 stretches are compositionally biased toward low complexity: residues 49 to 65 and 116 to 133; these read GLRP…LLLP and SGVP…ELSP. A Ras-GEF domain is found at 424-660; the sequence is EPEDVANHLT…FELSYKLEAN (237 aa).

Its function is as follows. Probable guanine nucleotide exchange factor (GEF). This Mus musculus (Mouse) protein is Rap guanine nucleotide exchange factor-like 1 (Rapgefl1).